The following is a 272-amino-acid chain: Phosphonates import ATP-binding protein PhnC 1 (272 aa).

Residues 2–246 (LRIQALTKTY…VLTSIYGEED (245 aa)) enclose the ABC transporter domain. 35–42 (GPSGAGKS) is an ATP binding site.

This sequence belongs to the ABC transporter superfamily. Phosphonates importer (TC 3.A.1.9.1) family. In terms of assembly, the complex is composed of two ATP-binding proteins (PhnC), two transmembrane proteins (PhnE) and a solute-binding protein (PhnD).

It localises to the cell inner membrane. It carries out the reaction phosphonate(out) + ATP + H2O = phosphonate(in) + ADP + phosphate + H(+). Part of the ABC transporter complex PhnCDE involved in phosphonates import. Responsible for energy coupling to the transport system. The chain is Phosphonates import ATP-binding protein PhnC 1 from Rhodopseudomonas palustris (strain BisB18).